Here is a 56-residue protein sequence, read N- to C-terminus: Large ribosomal subunit protein bL33 (56 aa).

It belongs to the bacterial ribosomal protein bL33 family.

In Halorhodospira halophila (strain DSM 244 / SL1) (Ectothiorhodospira halophila (strain DSM 244 / SL1)), this protein is Large ribosomal subunit protein bL33.